Reading from the N-terminus, the 347-residue chain is MDMKVEKLSEDEIALYDRQIRLWGMTAQANMRSAKVLLINLGAIGSEITKSIVLSGIGHLTILDGHMVTEEDLGSQFFIGSEDVGQWKIDATKERIQDLNPRIELNFDKQDLQEKDEEFFQQFDLVVATEMQIDEAIKINTLTRKLNIPLYVAGSNGLFAYVFIDLIEFISEDEKLQSVRPTTVGPISSNRSIIEVTTRKDEEDEKKTYERIKTKNCYRPLNEVLSTATLKEKMTQRQLKRVTSILPLTLSLLQYGLNQKGKAISFEQMKRDAAVWCENLGVPATVVKDDYIQQFIKQKGIEFAPVAAIIGGAVAQDVINILGKRLSPLNNFIVFDGITLDMPLFEF.

The residue at position 9 (serine 9) is a Phosphoserine. Lysine 35 is covalently cross-linked (Glycyl lysine isopeptide (Lys-Gly) (interchain with G-Cter in SUMO)).

Could be involved in a ubiquitin-related process important for DNA damage tolerance. This is DNA damage tolerance protein RHC31 (AOS1) from Saccharomyces cerevisiae (strain ATCC 204508 / S288c) (Baker's yeast).